Consider the following 546-residue polypeptide: CTP synthase (546 aa).

An amidoligase domain region spans residues 1 to 267 (MSKFVFVTGG…AQQTLELLNL (267 aa)). S13 is a binding site for CTP. S13 contacts UTP. ATP-binding positions include 14–19 (SIGKGI) and D71. Mg(2+) contacts are provided by D71 and E141. Residues 148-150 (DIE), 188-193 (KTKPTQ), and K224 contribute to the CTP site. UTP is bound by residues 188–193 (KTKPTQ) and K224. Residues 292 to 534 (EIAIVGKYVQ…MKAALKGREE (243 aa)) enclose the Glutamine amidotransferase type-1 domain. G354 serves as a coordination point for L-glutamine. C381 functions as the Nucleophile; for glutamine hydrolysis in the catalytic mechanism. Residues 382–385 (LGMQ), E405, and R462 each bind L-glutamine. Active-site residues include H507 and E509.

Belongs to the CTP synthase family. Homotetramer.

The enzyme catalyses UTP + L-glutamine + ATP + H2O = CTP + L-glutamate + ADP + phosphate + 2 H(+). The catalysed reaction is L-glutamine + H2O = L-glutamate + NH4(+). It catalyses the reaction UTP + NH4(+) + ATP = CTP + ADP + phosphate + 2 H(+). It functions in the pathway pyrimidine metabolism; CTP biosynthesis via de novo pathway; CTP from UDP: step 2/2. Allosterically activated by GTP, when glutamine is the substrate; GTP has no effect on the reaction when ammonia is the substrate. The allosteric effector GTP functions by stabilizing the protein conformation that binds the tetrahedral intermediate(s) formed during glutamine hydrolysis. Inhibited by the product CTP, via allosteric rather than competitive inhibition. In terms of biological role, catalyzes the ATP-dependent amination of UTP to CTP with either L-glutamine or ammonia as the source of nitrogen. Regulates intracellular CTP levels through interactions with the four ribonucleotide triphosphates. The protein is CTP synthase of Microcystis aeruginosa (strain NIES-843 / IAM M-2473).